A 410-amino-acid chain; its full sequence is Arginine deiminase (410 aa).

Residue Cys400 is the Amidino-cysteine intermediate of the active site.

This sequence belongs to the arginine deiminase family.

It is found in the cytoplasm. The enzyme catalyses L-arginine + H2O = L-citrulline + NH4(+). The protein operates within amino-acid degradation; L-arginine degradation via ADI pathway; carbamoyl phosphate from L-arginine: step 1/2. The polypeptide is Arginine deiminase (Bacillus cytotoxicus (strain DSM 22905 / CIP 110041 / 391-98 / NVH 391-98)).